Consider the following 485-residue polypeptide: Podocalyxin (485 aa).

Residues 1–24 (MRPTLALSALLLLQLLLLSTPSLS) form the signal peptide. The tract at residues 22–267 (SLSQDNGNKT…STPSSTWTSG (246 aa)) is disordered. The Extracellular segment spans residues 25-386 (QDNGNKTDTS…PPEVNEDRFS (362 aa)). A compositionally biased stretch (polar residues) spans 26–57 (DNGNKTDTSDITSIDQNQDKPATNQPSNATPK). N-linked (GlcNAc...) asparagine glycosylation is found at asparagine 29 and asparagine 82. Residues 58–109 (SSVQPPTPTSISTSSPDPKATQSSNSSVTTTSDSTTDRTSSSTSTVPTTSNS) show a composition bias toward low complexity. Composition is skewed to polar residues over residues 110 to 128 (GQTVSSGGKSSDKITTALP) and 135 to 149 (NASSQPTDLNTSTKL). N-linked (GlcNAc...) asparagine glycans are attached at residues asparagine 135, asparagine 144, and asparagine 156. Over residues 150–161 (PSTPTTNSTASP) the composition is skewed to low complexity. Polar residues-rich tracts occupy residues 163–176 (QPVSHSEGQHTTVQ), 186–228 (DNTT…QPTG), and 235–253 (SVPTTEEFTHSTSSWTPVV). An N-linked (GlcNAc...) asparagine glycan is attached at asparagine 187. Residues 254 to 267 (SQGPSTPSSTWTSG) are compositionally biased toward low complexity. Residue asparagine 287 is glycosylated (N-linked (GlcNAc...) asparagine). A helical transmembrane segment spans residues 387 to 407 (LPLIITIVCMASFLLLVAALY). The Cytoplasmic portion of the chain corresponds to 408-485 (GCCHQRISQR…DLDEEEDTHL (78 aa)). The residue at position 445 (threonine 445) is a Phosphothreonine. Phosphoserine is present on serine 464. The residue at position 483 (threonine 483) is a Phosphothreonine.

It belongs to the podocalyxin family. As to quaternary structure, monomer; when associated with the membrane raft. Oligomer; when integrated in the apical membrane. Interacts with NHERF2. Interacts (via the C-terminal PDZ-binding motif DTHL) with NHERF1 (via the PDZ domains); the interaction take place early in the secretory pathway and is necessary for its apical membrane sorting. Found in a complex with EZR, PODXL and NHERF2. Associates with the actin cytoskeleton through complex formation with EZR and NHERF2. Interacts (via the C-terminal PDZ-binding motif DTHL) with NHERF1 (via the PDZ domains); interaction is not detected in glomerular epithelium cells. Interacts (via the C-terminal PDZ-binding motif DTHL) with NHERF2 (via the PDZ 1 domain); interaction is detected in glomerular epithelium cells. Interacts with EZR. Post-translationally, N- and O-linked glycosylated. Sialoglycoprotein. As to expression, glomerular epithelium cell (podocyte) (at protein level).

It is found in the apical cell membrane. Its subcellular location is the cell projection. The protein localises to the microvillus. It localises to the membrane raft. The protein resides in the lamellipodium. It is found in the filopodium. Its subcellular location is the ruffle. The protein localises to the membrane. Its function is as follows. Involved in the regulation of both adhesion and cell morphology and cancer progression. Functions as an anti-adhesive molecule that maintains an open filtration pathway between neighboring foot processes in the podocyte by charge repulsion. Acts as a pro-adhesive molecule, enhancing the adherence of cells to immobilized ligands, increasing the rate of migration and cell-cell contacts in an integrin-dependent manner. Induces the formation of apical actin-dependent microvilli. Involved in the formation of a preapical plasma membrane subdomain to set up initial epithelial polarization and the apical lumen formation during renal tubulogenesis. Plays a role in cancer development and aggressiveness by inducing cell migration and invasion through its interaction with the actin-binding protein EZR. Affects EZR-dependent signaling events, leading to increased activities of the MAPK and PI3K pathways in cancer cells. This is Podocalyxin (Podxl) from Rattus norvegicus (Rat).